We begin with the raw amino-acid sequence, 307 residues long: Glycine--tRNA ligase alpha subunit (307 aa).

Belongs to the class-II aminoacyl-tRNA synthetase family. Tetramer of two alpha and two beta subunits.

The protein localises to the cytoplasm. The catalysed reaction is tRNA(Gly) + glycine + ATP = glycyl-tRNA(Gly) + AMP + diphosphate. The sequence is that of Glycine--tRNA ligase alpha subunit from Aeromonas hydrophila subsp. hydrophila (strain ATCC 7966 / DSM 30187 / BCRC 13018 / CCUG 14551 / JCM 1027 / KCTC 2358 / NCIMB 9240 / NCTC 8049).